The chain runs to 576 residues: Proton pump-interactor 3B (576 aa).

A disordered region spans residues 34 to 63; that stretch reads SEVTTDEEEDTIFSGGDSSSGLAAEEDSSG. Coiled coils occupy residues 132–155 and 205–241; these read RMVI…LRCT and EKEA…SDKL. The span at 369–381 shows a compositional bias: basic and acidic residues; the sequence is RSEKVHKMNREDS. The interval 369-395 is disordered; it reads RSEKVHKMNREDSSSNSSEDGNVITDK. The stretch at 411-467 forms a coiled coil; sequence KKKEEEIDEEALKERKREEQLEKARLVMERKRKLQEKAAAKAAIRAQKEAEKKLKAI. A helical membrane pass occupies residues 555–575; sequence WVWGLSSAALAVSLVLVVLLL.

The protein belongs to the plant Proton pump-interactor protein family.

Its subcellular location is the cell membrane. It is found in the endoplasmic reticulum membrane. Functionally, may regulate plasma membrane ATPase activity. The protein is Proton pump-interactor 3B (PPI3B) of Arabidopsis thaliana (Mouse-ear cress).